The sequence spans 464 residues: tRNA modification GTPase MnmE (464 aa).

Arg-27, Glu-90, and Lys-129 together coordinate (6S)-5-formyl-5,6,7,8-tetrahydrofolate. Residues 222–384 (GITLVLAGSV…LYDKIRTLIS (163 aa)) enclose the TrmE-type G domain. GTP is bound by residues 232–237 (NAGKSS), 251–257 (SSYPGTT), and 276–279 (DTAG). Positions 236 and 257 each coordinate Mg(2+). Lys-464 is a binding site for (6S)-5-formyl-5,6,7,8-tetrahydrofolate.

It belongs to the TRAFAC class TrmE-Era-EngA-EngB-Septin-like GTPase superfamily. TrmE GTPase family. In terms of assembly, homodimer. Heterotetramer of two MnmE and two MnmG subunits. It depends on K(+) as a cofactor.

Its subcellular location is the cytoplasm. Exhibits a very high intrinsic GTPase hydrolysis rate. Involved in the addition of a carboxymethylaminomethyl (cmnm) group at the wobble position (U34) of certain tRNAs, forming tRNA-cmnm(5)s(2)U34. The sequence is that of tRNA modification GTPase MnmE from Borreliella afzelii (strain PKo) (Borrelia afzelii).